The primary structure comprises 749 residues: Protein O-mannosyl-transferase 2 (749 aa).

Residues 1–30 form a disordered region; the sequence is MAASVVKTPKCPRRGSAKEQQSKASPKSNN. A helical membrane pass occupies residues 34 to 54; it reads NWHWWILLASVFLITFATRFY. Asn78, Asn104, and Asn117 each carry an N-linked (GlcNAc...) asparagine glycan. Transmembrane regions (helical) follow at residues 126–146, 173–193, 204–224, 226–246, and 266–286; these read YFCTTLGALIMPMGFDTVYDL, ILLDPILLFFMMGSVWGMVKI, SVRWWFWLFLTGTMLSCTISV, FVGLFVVLLVGLHTATELWLI, and IALILWPILLYTLFFYIHLSV. Residues Asn288 and Asn312 are each glycosylated (N-linked (GlcNAc...) asparagine). 3 MIR domains span residues 316–372, 382–438, and 443–499; these read PRDV…IKPH, LQLL…VLIV, and NETV…VEDN. N-linked (GlcNAc...) asparagine glycosylation is present at Asn443. A run of 4 helical transmembrane segments spans residues 572–592, 645–665, 669–689, and 703–723; these read IWWSNLVFLALFVAVFLGNAI, LGAAAWLFVGWLLHYLPFWAM, LYFHHYFPALIFNSLLTGVMF, and VLLGGLLSLIVYSFALFSPLA. Asn735 is a glycosylation site (N-linked (GlcNAc...) asparagine).

Belongs to the glycosyltransferase 39 family. As to quaternary structure, interacts with Rt/POMT1.

The protein resides in the endoplasmic reticulum membrane. It catalyses the reaction a di-trans,poly-cis-dolichyl beta-D-mannosyl phosphate + L-seryl-[protein] = 3-O-(alpha-D-mannosyl)-L-seryl-[protein] + a di-trans,poly-cis-dolichyl phosphate + H(+). The catalysed reaction is a di-trans,poly-cis-dolichyl beta-D-mannosyl phosphate + L-threonyl-[protein] = 3-O-(alpha-D-mannosyl)-L-threonyl-[protein] + a di-trans,poly-cis-dolichyl phosphate + H(+). The protein operates within protein modification; protein glycosylation. In terms of biological role, rt/POMT1 and tw/POMT2 function as a protein O-mannosyltransferase in association with each other to generate and maintain normal muscle development. The polypeptide is Protein O-mannosyl-transferase 2 (Drosophila pseudoobscura pseudoobscura (Fruit fly)).